The following is a 975-amino-acid chain: Translation initiation factor IF-2 (975 aa).

Basic and acidic residues-rich tracts occupy residues 48-63 (DHLRKSHGATDGDKRK) and 120-177 (AELK…EAAA). Disordered stretches follow at residues 48–85 (DHLRKSHGATDGDKRKITLTRRHTSEIKQADATGKART) and 98–390 (KRDD…PTEP). Positions 178–211 (KRAAAAQAEAAQQAAAAREQAQRAQSEPAEQSAQ) are enriched in low complexity. A compositionally biased stretch (basic and acidic residues) spans 212–263 (DEARAAAERAAQREAAKKAEDAAREAADKARAEQEEIRKRREAAEAEARAIR). Positions 302 to 330 (KPAGEAAAARPAAKKPASGAPAPAAAPAG) are enriched in low complexity. Residues 359–372 (SSGGVDRGWRGGPK) are compositionally biased toward gly residues. Residues 475–644 (PRPPVVTVMG…LLQAEVLELK (170 aa)) enclose the tr-type G domain. The segment at 484–491 (GHVDHGKT) is G1. GTP is bound at residue 484 to 491 (GHVDHGKT). Positions 509–513 (GITQH) are G2. The tract at residues 530 to 533 (DTPG) is G3. GTP is bound by residues 530-534 (DTPGH) and 584-587 (NKID). A G4 region spans residues 584-587 (NKID). The interval 620–622 (SAK) is G5.

This sequence belongs to the TRAFAC class translation factor GTPase superfamily. Classic translation factor GTPase family. IF-2 subfamily.

Its subcellular location is the cytoplasm. Functionally, one of the essential components for the initiation of protein synthesis. Protects formylmethionyl-tRNA from spontaneous hydrolysis and promotes its binding to the 30S ribosomal subunits. Also involved in the hydrolysis of GTP during the formation of the 70S ribosomal complex. The polypeptide is Translation initiation factor IF-2 (Burkholderia pseudomallei (strain 1106a)).